Reading from the N-terminus, the 506-residue chain is Lysine--tRNA ligase (506 aa).

Mg(2+) is bound by residues Glu416 and Glu423.

Belongs to the class-II aminoacyl-tRNA synthetase family. In terms of assembly, homodimer. Mg(2+) serves as cofactor.

It localises to the cytoplasm. It catalyses the reaction tRNA(Lys) + L-lysine + ATP = L-lysyl-tRNA(Lys) + AMP + diphosphate. The polypeptide is Lysine--tRNA ligase (Pelotomaculum thermopropionicum (strain DSM 13744 / JCM 10971 / SI)).